The following is a 440-amino-acid chain: MFLAQEIIRKKRDGHALSDEEIRFFINGIRDNTISEGQIAALAMTIFFHDMTMPERVSLTMAMRDSGSVLDWKSLNLNGPIVDKHSTGGVGDVTSLMLGPMVAACGGYVPMISGRGLGHTGGTLDKLEAIPGFDIFPDDNRFREIIQDVGVAIIGQTSSLAPADKRFYATRDITATVDSIPLITGSILAKKLAEGLDALVMDVKVGSGAFMPTYELSEALAEAIVGVANGAGVRTTALLTDMNQVLASSAGNAVEVREAVQFLTGEYRNPRLFDVTMALCVEMLISGQLAKDDAEARAKLQAVLDNGKAAEVFGRMVAAQKGPSDFVENYDKYLPTAMLSKAVYADTEGFISAMDTRALGMAVVSMGGGRRQASDTIDYSVGFTDMARLGDSIDGQRPLAVIHAKDETSWQEAAKAVKAAIILDDKAPASTPSVYRRITE.

This sequence belongs to the thymidine/pyrimidine-nucleoside phosphorylase family. In terms of assembly, homodimer.

It catalyses the reaction thymidine + phosphate = 2-deoxy-alpha-D-ribose 1-phosphate + thymine. Its pathway is pyrimidine metabolism; dTMP biosynthesis via salvage pathway; dTMP from thymine: step 1/2. Functionally, the enzymes which catalyze the reversible phosphorolysis of pyrimidine nucleosides are involved in the degradation of these compounds and in their utilization as carbon and energy sources, or in the rescue of pyrimidine bases for nucleotide synthesis. This is Thymidine phosphorylase from Salmonella schwarzengrund (strain CVM19633).